The primary structure comprises 108 residues: UPF0060 membrane protein Mvan_3406 (108 aa).

A run of 4 helical transmembrane segments spans residues 7–27 (LLFV…WQGV), 32–52 (GLTW…VAAF), 61–81 (VLAA…VVAD), and 87–107 (RWDI…MYAP).

Belongs to the UPF0060 family.

The protein resides in the cell membrane. This Mycolicibacterium vanbaalenii (strain DSM 7251 / JCM 13017 / BCRC 16820 / KCTC 9966 / NRRL B-24157 / PYR-1) (Mycobacterium vanbaalenii) protein is UPF0060 membrane protein Mvan_3406.